We begin with the raw amino-acid sequence, 391 residues long: 2,4,6-trihydroxybenzophenone synthase (391 aa).

Residue cysteine 165 is part of the active site.

It belongs to the thiolase-like superfamily. Chalcone/stilbene synthases family. As to quaternary structure, homodimer. Expressed in young fruit pericarp.

The catalysed reaction is benzoyl-CoA + 3 malonyl-CoA + 2 H(+) = 2,4,6-trihydroxybenzophenone + 3 CO2 + 4 CoA. Type III polyketide synthase involved in the biosynthesis of benzophenones and xanthones. Produces mainly 2,4,6-trihydroxybenzophenone together with minor amounts of tetraketide lactone, triketide lactone and diketide lactone. The preferred substrate is benzoyl-CoA, but can also use acetyl-CoA, phenylacetyl-CoA, hexanoyl-CoA, cinnamoyl-CoA, p-coumaroyl-CoA and salicoyl-CoA. This Garcinia mangostana (Mangosteen) protein is 2,4,6-trihydroxybenzophenone synthase (BPS).